We begin with the raw amino-acid sequence, 120 residues long: Ribosome-binding factor A (120 aa).

It belongs to the RbfA family. Monomer. Binds 30S ribosomal subunits, but not 50S ribosomal subunits or 70S ribosomes.

The protein localises to the cytoplasm. In terms of biological role, one of several proteins that assist in the late maturation steps of the functional core of the 30S ribosomal subunit. Associates with free 30S ribosomal subunits (but not with 30S subunits that are part of 70S ribosomes or polysomes). Required for efficient processing of 16S rRNA. May interact with the 5'-terminal helix region of 16S rRNA. The protein is Ribosome-binding factor A of Chlamydia felis (strain Fe/C-56) (Chlamydophila felis).